Here is a 371-residue protein sequence, read N- to C-terminus: Anhydro-N-acetylmuramic acid kinase (371 aa).

12 to 20 (GTVLDGNID) is an ATP binding site.

Belongs to the anhydro-N-acetylmuramic acid kinase family.

It catalyses the reaction 1,6-anhydro-N-acetyl-beta-muramate + ATP + H2O = N-acetyl-D-muramate 6-phosphate + ADP + H(+). Its pathway is amino-sugar metabolism; 1,6-anhydro-N-acetylmuramate degradation. It functions in the pathway cell wall biogenesis; peptidoglycan recycling. Functionally, catalyzes the specific phosphorylation of 1,6-anhydro-N-acetylmuramic acid (anhMurNAc) with the simultaneous cleavage of the 1,6-anhydro ring, generating MurNAc-6-P. Is required for the utilization of anhMurNAc either imported from the medium or derived from its own cell wall murein, and thus plays a role in cell wall recycling. This chain is Anhydro-N-acetylmuramic acid kinase, found in Brucella anthropi (strain ATCC 49188 / DSM 6882 / CCUG 24695 / JCM 21032 / LMG 3331 / NBRC 15819 / NCTC 12168 / Alc 37) (Ochrobactrum anthropi).